We begin with the raw amino-acid sequence, 356 residues long: tRNA N6-adenosine threonylcarbamoyltransferase (356 aa).

Positions 116 and 120 each coordinate Fe cation. Residues 139–143 (IVSGG), Asp-174, Gly-187, Asp-191, and Asn-281 each bind substrate. Fe cation is bound at residue Asp-309.

It belongs to the KAE1 / TsaD family. It depends on Fe(2+) as a cofactor.

The protein localises to the cytoplasm. It catalyses the reaction L-threonylcarbamoyladenylate + adenosine(37) in tRNA = N(6)-L-threonylcarbamoyladenosine(37) in tRNA + AMP + H(+). Required for the formation of a threonylcarbamoyl group on adenosine at position 37 (t(6)A37) in tRNAs that read codons beginning with adenine. Is involved in the transfer of the threonylcarbamoyl moiety of threonylcarbamoyl-AMP (TC-AMP) to the N6 group of A37, together with TsaE and TsaB. TsaD likely plays a direct catalytic role in this reaction. The sequence is that of tRNA N6-adenosine threonylcarbamoyltransferase from Frankia alni (strain DSM 45986 / CECT 9034 / ACN14a).